We begin with the raw amino-acid sequence, 246 residues long: MPKKFIVANWKMHKTVREALAFLDEFIPITKGLNGREIGIAPTFICIESVGKVLINTSIKLCAQNAFYENKGAYTGEVSPAMLKDCGVEYVIIGHSERRKYFYENDDIINKKIHACIKEGLKVIFCIGETFEDRQNNKTMEILKTQIRNGLLEINSPEALTIAYEPVWAIGTGVVATEEQIKQSHLFIRNQLKEIYGERANEVRILYGGSVTPENIKSIMAIDNVEGVLVGGASLDPLKFAKIVKY.

9–11 (NWK) serves as a coordination point for substrate. His95 (electrophile) is an active-site residue. The Proton acceptor role is filled by Glu165. Residues Gly171, Ser210, and 231 to 232 (GG) contribute to the substrate site.

This sequence belongs to the triosephosphate isomerase family. As to quaternary structure, homodimer.

Its subcellular location is the cytoplasm. It carries out the reaction D-glyceraldehyde 3-phosphate = dihydroxyacetone phosphate. It participates in carbohydrate biosynthesis; gluconeogenesis. Its pathway is carbohydrate degradation; glycolysis; D-glyceraldehyde 3-phosphate from glycerone phosphate: step 1/1. Involved in the gluconeogenesis. Catalyzes stereospecifically the conversion of dihydroxyacetone phosphate (DHAP) to D-glyceraldehyde-3-phosphate (G3P). In Thermodesulfovibrio yellowstonii (strain ATCC 51303 / DSM 11347 / YP87), this protein is Triosephosphate isomerase.